The primary structure comprises 157 residues: MNPDIVNLESNLNGEGLRIGVVMARFNLPVCEGLRDACLDELLALGVEPTDITFVTVPGALEIPLALQAMAQNEDDSYDALVALGAVIRGETYHFELVSNEAGAALTRVGLDFDIPVANGVLTCDTDEQAEARMAEKGRDCARCAVEMANLQKAFYD.

5-amino-6-(D-ribitylamino)uracil contacts are provided by residues phenylalanine 26, 60-62, and 86-88; these read ALE and AVI. A (2S)-2-hydroxy-3-oxobutyl phosphate-binding site is contributed by 91–92; the sequence is ET. Catalysis depends on histidine 94, which acts as the Proton donor. Asparagine 119 is a binding site for 5-amino-6-(D-ribitylamino)uracil. (2S)-2-hydroxy-3-oxobutyl phosphate is bound at residue arginine 133.

It belongs to the DMRL synthase family.

The enzyme catalyses (2S)-2-hydroxy-3-oxobutyl phosphate + 5-amino-6-(D-ribitylamino)uracil = 6,7-dimethyl-8-(1-D-ribityl)lumazine + phosphate + 2 H2O + H(+). It functions in the pathway cofactor biosynthesis; riboflavin biosynthesis; riboflavin from 2-hydroxy-3-oxobutyl phosphate and 5-amino-6-(D-ribitylamino)uracil: step 1/2. Functionally, catalyzes the formation of 6,7-dimethyl-8-ribityllumazine by condensation of 5-amino-6-(D-ribitylamino)uracil with 3,4-dihydroxy-2-butanone 4-phosphate. This is the penultimate step in the biosynthesis of riboflavin. In Laribacter hongkongensis (strain HLHK9), this protein is 6,7-dimethyl-8-ribityllumazine synthase.